Reading from the N-terminus, the 283-residue chain is Bifunctional protein FolD (283 aa).

Residues 164–166 (GRS), Ser189, and Ile230 each bind NADP(+).

The protein belongs to the tetrahydrofolate dehydrogenase/cyclohydrolase family. As to quaternary structure, homodimer.

The catalysed reaction is (6R)-5,10-methylene-5,6,7,8-tetrahydrofolate + NADP(+) = (6R)-5,10-methenyltetrahydrofolate + NADPH. The enzyme catalyses (6R)-5,10-methenyltetrahydrofolate + H2O = (6R)-10-formyltetrahydrofolate + H(+). The protein operates within one-carbon metabolism; tetrahydrofolate interconversion. Catalyzes the oxidation of 5,10-methylenetetrahydrofolate to 5,10-methenyltetrahydrofolate and then the hydrolysis of 5,10-methenyltetrahydrofolate to 10-formyltetrahydrofolate. The chain is Bifunctional protein FolD from Lactobacillus delbrueckii subsp. bulgaricus (strain ATCC BAA-365 / Lb-18).